We begin with the raw amino-acid sequence, 167 residues long: HTH-type transcriptional repressor YetL (167 aa).

The region spanning 26–160 (SLELFLSLFD…FVKMLGDLFE (135 aa)) is the HTH marR-type domain. Positions 74–97 (PTELAKRSNVTKATITGLLDGLAR) form a DNA-binding region, H-T-H motif.

As to quaternary structure, homodimer. The N- and C-terminal helices from both subunits stabilize YetL dimer via extensive intersubunit interactions.

Its activity is regulated as follows. Binding to the yetM cis sequence is clearly inhibited by kaempferol, morin, apigenin and luteolin, slightly inhibited by quercetin and galangin, but no inhibition is observed with the other flavonoids. Flavonoid binding may induce conformational changes and modulate interaction with DNA. In terms of biological role, negatively regulates yetM expression and its own expression. Binds specifically to corresponding single sites in the divergent yetL and yetM promoter regions, with higher affinity to the yetM region. Recognizes a 28-mer operator of double-stranded DNA that contains a palindromic sequence. This Bacillus subtilis (strain 168) protein is HTH-type transcriptional repressor YetL (yetL).